A 93-amino-acid polypeptide reads, in one-letter code: Phosphoribosyl-ATP pyrophosphatase (93 aa).

Belongs to the PRA-PH family.

It is found in the cytoplasm. The catalysed reaction is 1-(5-phospho-beta-D-ribosyl)-ATP + H2O = 1-(5-phospho-beta-D-ribosyl)-5'-AMP + diphosphate + H(+). The protein operates within amino-acid biosynthesis; L-histidine biosynthesis; L-histidine from 5-phospho-alpha-D-ribose 1-diphosphate: step 2/9. The protein is Phosphoribosyl-ATP pyrophosphatase of Mycobacterium avium (strain 104).